Here is a 102-residue protein sequence, read N- to C-terminus: MVQVVSQENFADSIASGLVLIDFFAEWCGPCKMLTPVLEALAAELPHVTILKVDIDSSPRPAEQYSVSSIPTLILFKDGKEVERSVGLKDKDSLIKLISKHQ.

Residues 1–102 (MVQVVSQENF…SLIKLISKHQ (102 aa)) enclose the Thioredoxin domain. A disulfide bridge connects residues C28 and C31.

Belongs to the thioredoxin family.

Participates in various redox reactions through the reversible oxidation of its active center dithiol to a disulfide and catalyzes dithiol-disulfide exchange reactions. This is Thioredoxin (trxA) from Chlamydia trachomatis serovar D (strain ATCC VR-885 / DSM 19411 / UW-3/Cx).